The sequence spans 217 residues: MRLRHKPYAMDRINEYSHIVIGNPEESAGNWKEIFGNEQPIHIEVGTGRGRFMYDMAKANPHINYIGIEKFTSVVVDALDKLIEEEVPNLKLINKDAEDLTVFFAKGEIDRVYLNFSDPWPKNRHTKRRLTYKTFLRNYEEVLVDGGEIHFKTDNQGLFEYSIMSMAEYGMLLTYLSLDLHNSDYEGNIMTEYEEKFSSKGHRIYRVEAKYRTEPMQ.

Glu44, Glu69, Asp96, and Asp118 together coordinate S-adenosyl-L-methionine. The active site involves Asp118. Residues Lys122, Asp154, and 191–194 (TEYE) contribute to the substrate site.

Belongs to the class I-like SAM-binding methyltransferase superfamily. TrmB family.

It carries out the reaction guanosine(46) in tRNA + S-adenosyl-L-methionine = N(7)-methylguanosine(46) in tRNA + S-adenosyl-L-homocysteine. It participates in tRNA modification; N(7)-methylguanine-tRNA biosynthesis. Its function is as follows. Catalyzes the formation of N(7)-methylguanine at position 46 (m7G46) in tRNA. This Bacillus mycoides (strain KBAB4) (Bacillus weihenstephanensis) protein is tRNA (guanine-N(7)-)-methyltransferase.